We begin with the raw amino-acid sequence, 898 residues long: Alanine--tRNA ligase (898 aa).

Histidine 584, histidine 588, cysteine 686, and histidine 690 together coordinate Zn(2+).

The protein belongs to the class-II aminoacyl-tRNA synthetase family. It depends on Zn(2+) as a cofactor.

The protein localises to the cytoplasm. It catalyses the reaction tRNA(Ala) + L-alanine + ATP = L-alanyl-tRNA(Ala) + AMP + diphosphate. Catalyzes the attachment of alanine to tRNA(Ala) in a two-step reaction: alanine is first activated by ATP to form Ala-AMP and then transferred to the acceptor end of tRNA(Ala). Also edits incorrectly charged Ser-tRNA(Ala) and Gly-tRNA(Ala) via its editing domain. This is Alanine--tRNA ligase from Myxococcus xanthus (strain DK1622).